Reading from the N-terminus, the 29-residue chain is Cytochrome b6-f complex subunit 8 (29 aa).

The chain crosses the membrane as a helical span at residues 3-23 (ILTLGWVGLLGLFTYSIAMVV).

This sequence belongs to the PetN family. The 4 large subunits of the cytochrome b6-f complex are cytochrome b6, subunit IV (17 kDa polypeptide, PetD), cytochrome f and the Rieske protein, while the 4 small subunits are PetG, PetL, PetM and PetN. The complex functions as a dimer.

The protein localises to the cellular thylakoid membrane. Functionally, component of the cytochrome b6-f complex, which mediates electron transfer between photosystem II (PSII) and photosystem I (PSI), cyclic electron flow around PSI, and state transitions. The chain is Cytochrome b6-f complex subunit 8 from Cyanothece sp. (strain PCC 7425 / ATCC 29141).